The chain runs to 575 residues: Triokinase/FMN cyclase (575 aa).

One can recognise a DhaK domain in the interval 9 to 336 (SVAGCADDAL…IDAETTAAAW (328 aa)). Dihydroxyacetone contacts are provided by residues 56-59 (GSGH), Lys109, and Asp114. The active-site Tele-hemiaminal-histidine intermediate is the His221. The tract at residues 348 to 367 (KRSRVAPAEPQEAPDSTAAG) is disordered. Ser350 is modified (phosphoserine). Residues 372–571 (KRMALVLERV…AAAILRAILE (200 aa)) enclose the DhaL domain. ATP is bound by residues 401-404 (DGDC), 446-447 (SS), Gly486, and 494-495 (TM). Phosphoserine occurs at positions 511 and 545. 556 to 558 (DPG) serves as a coordination point for ATP.

This sequence belongs to the dihydroxyacetone kinase (DAK) family. As to quaternary structure, homodimer. Interacts with IFIH1 (via the CARD domains), the interaction is inhibited by viral infection. It depends on Mg(2+) as a cofactor. The cofactor is Mn(2+). Co(2+) serves as cofactor. Detected in erythrocytes (at protein level).

The enzyme catalyses dihydroxyacetone + ATP = dihydroxyacetone phosphate + ADP + H(+). It catalyses the reaction D-glyceraldehyde + ATP = D-glyceraldehyde 3-phosphate + ADP + H(+). The catalysed reaction is FAD = riboflavin cyclic-4',5'-phosphate + AMP + H(+). Each activity is inhibited by the substrate(s) of the other. Its function is as follows. Catalyzes both the phosphorylation of dihydroxyacetone and of glyceraldehyde, and the splitting of ribonucleoside diphosphate-X compounds among which FAD is the best substrate. Represses IFIH1-mediated cellular antiviral response. This is Triokinase/FMN cyclase from Homo sapiens (Human).